Consider the following 234-residue polypeptide: Sugar fermentation stimulation protein homolog (234 aa).

This sequence belongs to the SfsA family.

This Edwardsiella ictaluri (strain 93-146) protein is Sugar fermentation stimulation protein homolog.